A 497-amino-acid polypeptide reads, in one-letter code: Serine/threonine-protein kinase cst-1 (497 aa).

Residues 1–27 (MPPSTDSSRRNSEEGSSDGFKLDSSAL) form a disordered region. Positions 35 to 286 (FDIVGKLGEG…ALRLCEHTFI (252 aa)) constitute a Protein kinase domain. ATP contacts are provided by residues 41 to 49 (LGEGSYGSV) and Lys-64. Asp-154 acts as the Proton acceptor in catalysis. The interval 367 to 416 (KSAYIPGSSKNGNSPRVQPPGHTASASDPSKNQPFAQDGTGPNFQLGTSE) is disordered. The span at 390 to 416 (ASASDPSKNQPFAQDGTGPNFQLGTSE) shows a compositional bias: polar residues. The SARAH domain occupies 446–493 (FEFLRNITLDELIRRKESLDSEMEEEIRELQRRYKTKRQPILDVIEIK). A coiled-coil region spans residues 450 to 486 (RNITLDELIRRKESLDSEMEEEIRELQRRYKTKRQPI).

It belongs to the protein kinase superfamily. STE Ser/Thr protein kinase family. STE20 subfamily. As to quaternary structure, interacts with rsf-1 (via SARAH domain); the interaction is required for the phosphorylation of cst-1. Mg(2+) serves as cofactor. Post-translationally, proteolytically cleaved by caspase-3 during apoptosis which results in kinase activation. In terms of processing, phosphorylated. As to expression, widely expressed in epidermal cells.

It carries out the reaction L-seryl-[protein] + ATP = O-phospho-L-seryl-[protein] + ADP + H(+). It catalyses the reaction L-threonyl-[protein] + ATP = O-phospho-L-threonyl-[protein] + ADP + H(+). In terms of biological role, serine/threonine-protein kinase which extends lifespan and delays tissue aging, probably by activating daf-16. The sequence is that of Serine/threonine-protein kinase cst-1 from Caenorhabditis elegans.